The following is a 574-amino-acid chain: Interleukin-22 receptor subunit alpha-1 (574 aa).

An N-terminal signal peptide occupies residues 1–15 (MRTLLTILTVGSLAA). Topologically, residues 16–228 (HAPEDPSDLL…VKTLPDRTWT (213 aa)) are extracellular. 2 Fibronectin type-III domains span residues 17 to 124 (APED…LKPP) and 141 to 221 (PTPT…RVKT). Cysteines 71 and 79 form a disulfide. Asn-80 and Asn-172 each carry an N-linked (GlcNAc...) asparagine glycan. Cys-128 and Cys-217 are disulfide-bonded. The chain crosses the membrane as a helical span at residues 229–249 (YSFSGAFLFSMGFLVAVLCYL). Residues 250–574 (SYRYVTKPPA…GLALTVQWES (325 aa)) lie on the Cytoplasmic side of the membrane. 3 disordered regions span residues 388-440 (SSYA…AGSC), 454-489 (AMEE…EGTP), and 507-560 (HPMS…TELD). Phosphoserine occurs at positions 410 and 414.

This sequence belongs to the type II cytokine receptor family. As to quaternary structure, heterodimer with IL10RB and with IL20RB. IL22 binding to heterodimer is greater than binding to IL22RA1 alone. Interacts with FBXW12; the interaction promotes ubiquitination of IL22RA1. Ubiquitinated. Expressed in colon, liver, lung, pancreas and kidney. No expression in immune cells such as monocytes, T-cells, and NK-cells. Expressed in keratinocytes of normal skin as well as in psoriatic skin lesion. Detected in normal blood brain barrier endothelial cells as well as in multiple sclerosis lesions; Strongly expressed on central nervous system vessels within infiltrated multiple sclerosis lesions. Overexpressed in synovial fluid cells from rheumatoid arthritis and spondyloarthropathy patients.

It localises to the cell membrane. In terms of biological role, component of the receptor for IL20, IL22 and IL24. Component of IL22 receptor formed by IL22RA1 and IL10RB enabling IL22 signaling via JAK/STAT pathways. IL22 also induces activation of MAPK1/MAPK3 and Akt kinases pathways. Component of one of the receptor for IL20 and IL24 formed by IL22RA1 and IL20RB also signaling through STATs activation. Mediates IL24 antiangiogenic activity as well as IL24 inhibitory effect on endothelial cell tube formation and differentiation. This Homo sapiens (Human) protein is Interleukin-22 receptor subunit alpha-1 (IL22RA1).